Here is a 425-residue protein sequence, read N- to C-terminus: CAAX prenyl protease 1 homolog (425 aa).

The next 5 helical transmembrane spans lie at 3–23 (LPYL…ETYL), 62–80 (FHFI…ILYY), 109–129 (LAFL…FSLY), 155–175 (GILL…IIVQ), and 188–208 (FMFA…APLF). H284 lines the Zn(2+) pocket. E285 is an active-site residue. H288 serves as a coordination point for Zn(2+). 2 helical membrane passes run 295–315 (VYSF…YTLV) and 332–352 (VIIG…LLSF). E362 contacts Zn(2+). The active-site Proton donor is D366.

It belongs to the peptidase M48A family. It depends on Zn(2+) as a cofactor.

Its subcellular location is the endoplasmic reticulum membrane. It carries out the reaction Hydrolyzes the peptide bond -P2-(S-farnesyl or geranylgeranyl)C-P1'-P2'-P3'-COOH where P1' and P2' are amino acids with aliphatic side chains and P3' is any C-terminal residue.. Its function is as follows. Proteolytically removes the C-terminal three residues of farnesylated proteins. This chain is CAAX prenyl protease 1 homolog (FACE1), found in Oryza sativa subsp. japonica (Rice).